Reading from the N-terminus, the 115-residue chain is Large ribosomal subunit protein bL19 (115 aa).

It belongs to the bacterial ribosomal protein bL19 family.

Its function is as follows. This protein is located at the 30S-50S ribosomal subunit interface and may play a role in the structure and function of the aminoacyl-tRNA binding site. The protein is Large ribosomal subunit protein bL19 of Brevibacillus brevis (strain 47 / JCM 6285 / NBRC 100599).